The following is a 92-amino-acid chain: DNA/RNA-binding protein Alba (92 aa).

An N6-acetyllysine modification is found at Lys-11.

It belongs to the histone-like Alba family. Acetylated. Acetylation at Lys-11 decreases DNA-binding affinity.

It is found in the cytoplasm. The protein resides in the chromosome. Its function is as follows. Binds double-stranded DNA tightly but without sequence specificity. Involved in DNA compaction. The sequence is that of DNA/RNA-binding protein Alba from Pyrobaculum aerophilum (strain ATCC 51768 / DSM 7523 / JCM 9630 / CIP 104966 / NBRC 100827 / IM2).